Here is a 392-residue protein sequence, read N- to C-terminus: Flagellar P-ring protein (392 aa).

The signal sequence occupies residues 1-38 (MKPFARRALLTAEPIRALLLAASLLAATLGLMPAEAFG).

The protein belongs to the FlgI family. The basal body constitutes a major portion of the flagellar organelle and consists of four rings (L,P,S, and M) mounted on a central rod.

Its subcellular location is the periplasm. It localises to the bacterial flagellum basal body. Functionally, assembles around the rod to form the L-ring and probably protects the motor/basal body from shearing forces during rotation. This Paramagnetospirillum magneticum (strain ATCC 700264 / AMB-1) (Magnetospirillum magneticum) protein is Flagellar P-ring protein.